The following is a 158-amino-acid chain: Cyclic pyranopterin monophosphate synthase (158 aa).

Residues 74–76 (MCH) and 112–113 (ME) each bind substrate. Residue Asp127 is part of the active site.

It belongs to the MoaC family. Homohexamer; trimer of dimers.

It catalyses the reaction (8S)-3',8-cyclo-7,8-dihydroguanosine 5'-triphosphate = cyclic pyranopterin phosphate + diphosphate. It participates in cofactor biosynthesis; molybdopterin biosynthesis. Functionally, catalyzes the conversion of (8S)-3',8-cyclo-7,8-dihydroguanosine 5'-triphosphate to cyclic pyranopterin monophosphate (cPMP). The sequence is that of Cyclic pyranopterin monophosphate synthase from Helicobacter pylori (strain J99 / ATCC 700824) (Campylobacter pylori J99).